The primary structure comprises 89 residues: Small ribosomal subunit protein bS20 (89 aa).

Positions 1–26 (MANSPQAKKRARQNEKNRKHNASLRS) are disordered. Residues 7-22 (AKKRARQNEKNRKHNA) are compositionally biased toward basic residues.

The protein belongs to the bacterial ribosomal protein bS20 family.

Its function is as follows. Binds directly to 16S ribosomal RNA. This chain is Small ribosomal subunit protein bS20, found in Marinobacter nauticus (strain ATCC 700491 / DSM 11845 / VT8) (Marinobacter aquaeolei).